Consider the following 372-residue polypeptide: MNASTTSKKPVIQLKGLNKSFDGKQIIAGLDLNVNDGEFLTILGPSGCGKTTVLRLIAGFENSDAGQVIIANKDVTQVPAEQRHVNTVFQSYALFPHMTVFENVAFGLRMQKVSESEIEPRVMDALRMVQLDKFAPRKPHQLSGGQQQRVAIARAVVNKPKVLLLDESLSALDYKLRKQMQLELKQLQRKLGITFIFVTHDQEEALSMSDRIIVMRDGNIEQDGSPREIYEEPTNLFVARFIGEINVFDATVKERLDEKRIMAEVEGRTAQIHCELAVKTGDKLKVLLRPEDIRLEEINNDEHAKGIIGYVRERTYKGMTLDSVIELESGMSVMVSEFFNEDDPDVDHSLNQKVAVTWVESWEVVLADEQEA.

The ABC transporter domain occupies 12–242 (IQLKGLNKSF…PTNLFVARFI (231 aa)). 44–51 (GPSGCGKT) serves as a coordination point for ATP.

Belongs to the ABC transporter superfamily. Spermidine/putrescine importer (TC 3.A.1.11.1) family. As to quaternary structure, the complex is composed of two ATP-binding proteins (PotA), two transmembrane proteins (PotB and PotC) and a solute-binding protein (PotD).

The protein resides in the cell inner membrane. It catalyses the reaction ATP + H2O + polyamine-[polyamine-binding protein]Side 1 = ADP + phosphate + polyamineSide 2 + [polyamine-binding protein]Side 1.. In terms of biological role, part of the ABC transporter complex PotABCD involved in spermidine/putrescine import. Responsible for energy coupling to the transport system. This Photobacterium profundum (strain SS9) protein is Spermidine/putrescine import ATP-binding protein PotA.